Consider the following 315-residue polypeptide: Solute carrier family 25 member 32 (315 aa).

Solcar repeat units follow at residues 20–109, 118–209, and 222–306; these read HVRY…IKSY, LEAT…LKLK, and LSTV…VSHF. 6 consecutive transmembrane segments (helical) span residues 26–43, 89–106, 123–143, 186–203, 227–243, and 281–300; these read LVAG…LHPL, VWGA…YNAI, YLVS…PLWV, FVPG…FMAY, YISV…AATY, and GIAP…FVVY.

The protein belongs to the mitochondrial carrier (TC 2.A.29) family.

The protein resides in the mitochondrion inner membrane. It carries out the reaction FAD(in) = FAD(out). In terms of biological role, facilitates flavin adenine dinucleotide (FAD) translocation across the mitochondrial inner membrane into the mitochondrial matrix where it acts as a redox cofactor to assist flavoenzyme activities in fundamental metabolic processes including fatty acid beta-oxidation, amino acid and choline metabolism as well as mitochondrial electron transportation. In particular, provides FAD to DLD dehydrogenase of the glycine cleavage system, part of mitochondrial one-carbon metabolic pathway involved in neural tube closure in early embryogenesis. In Macaca fascicularis (Crab-eating macaque), this protein is Solute carrier family 25 member 32.